The primary structure comprises 201 residues: Peptide deformylase (201 aa).

The Fe cation site is built by C121 and H163. E164 is a catalytic residue. H167 lines the Fe cation pocket.

This sequence belongs to the polypeptide deformylase family. It depends on Fe(2+) as a cofactor.

The enzyme catalyses N-terminal N-formyl-L-methionyl-[peptide] + H2O = N-terminal L-methionyl-[peptide] + formate. Functionally, removes the formyl group from the N-terminal Met of newly synthesized proteins. Requires at least a dipeptide for an efficient rate of reaction. N-terminal L-methionine is a prerequisite for activity but the enzyme has broad specificity at other positions. In Synechococcus sp. (strain CC9902), this protein is Peptide deformylase.